Consider the following 174-residue polypeptide: Protein GrpE (174 aa).

Belongs to the GrpE family. Homodimer.

The protein localises to the cytoplasm. In terms of biological role, participates actively in the response to hyperosmotic and heat shock by preventing the aggregation of stress-denatured proteins, in association with DnaK and GrpE. It is the nucleotide exchange factor for DnaK and may function as a thermosensor. Unfolded proteins bind initially to DnaJ; upon interaction with the DnaJ-bound protein, DnaK hydrolyzes its bound ATP, resulting in the formation of a stable complex. GrpE releases ADP from DnaK; ATP binding to DnaK triggers the release of the substrate protein, thus completing the reaction cycle. Several rounds of ATP-dependent interactions between DnaJ, DnaK and GrpE are required for fully efficient folding. This chain is Protein GrpE, found in Pseudothermotoga lettingae (strain ATCC BAA-301 / DSM 14385 / NBRC 107922 / TMO) (Thermotoga lettingae).